Here is a 377-residue protein sequence, read N- to C-terminus: MSRGIIIIGSGFAARQLVKNIRKQDAHVPLTLIAADSMDEYNKPDLSHVISQSQRADDLTRQLAGEFAEQFNLRLFPHTWVTDIDADAHVVKSQDKQWQYDKLVLATGAAAFVPPIAGRELMLTLNSQQEYRACETQLRDAQRVLIVGGGLIGSELAMDFCRAGKTVTLMDNAASLLASLMPPEVSSRLQHHLTDMGVHLLLKSQLQKLEKTEAGIRATLVSQHSIEVDAVIAATGLRPETALARRAGVAVNRGVCVDSYLQTSHPDIYAIGDCAEINGQVLPFLQPIQLSAMYLAKNLLGGSAPLKLPAMLVKVKTPELPLHLAGETQRHDLSWQITAESDGMIAKGMSGEGQLRAFVVSEDRMKEAFALLKTLSV.

Belongs to the FAD-dependent oxidoreductase family. FAD is required as a cofactor.

It is found in the cytoplasm. It catalyses the reaction 2 reduced [nitric oxide reductase rubredoxin domain] + NAD(+) + H(+) = 2 oxidized [nitric oxide reductase rubredoxin domain] + NADH. The protein operates within nitrogen metabolism; nitric oxide reduction. Functionally, one of at least two accessory proteins for anaerobic nitric oxide (NO) reductase. Reduces the rubredoxin moiety of NO reductase. The chain is Nitric oxide reductase FlRd-NAD(+) reductase from Salmonella heidelberg (strain SL476).